The chain runs to 493 residues: ATP synthase subunit beta, chloroplastic (493 aa).

Position 170–177 (170–177 (GGAGVGKT)) interacts with ATP.

The protein belongs to the ATPase alpha/beta chains family. In terms of assembly, F-type ATPases have 2 components, CF(1) - the catalytic core - and CF(0) - the membrane proton channel. CF(1) has five subunits: alpha(3), beta(3), gamma(1), delta(1), epsilon(1). CF(0) has four main subunits: a(1), b(1), b'(1) and c(9-12).

It localises to the plastid. The protein localises to the chloroplast thylakoid membrane. It carries out the reaction ATP + H2O + 4 H(+)(in) = ADP + phosphate + 5 H(+)(out). Produces ATP from ADP in the presence of a proton gradient across the membrane. The catalytic sites are hosted primarily by the beta subunits. This is ATP synthase subunit beta, chloroplastic from Staurastrum punctulatum (Green alga).